A 107-amino-acid polypeptide reads, in one-letter code: Small leucine-rich protein 1 (107 aa).

Helical transmembrane passes span 19 to 39 and 53 to 73; these read AALV…LAMS and FLFF…IAYF. Positions 85-107 are disordered; the sequence is SQNCDRQHNPKDGSSLYQRMKWT.

The protein resides in the membrane. The polypeptide is Small leucine-rich protein 1 (SMLR1) (Homo sapiens (Human)).